Consider the following 263-residue polypeptide: Nitrogenase iron protein 2 (263 aa).

Residue 9–16 coordinates ATP; it reads GKGGIGKS. Position 92 (Cys92) interacts with [4Fe-4S] cluster. ADP-ribosylarginine; by dinitrogenase reductase ADP-ribosyltransferase is present on Arg95. Cys127 lines the [4Fe-4S] cluster pocket.

The protein belongs to the NifH/BchL/ChlL family. As to quaternary structure, homodimer. The cofactor is [4Fe-4S] cluster. Post-translationally, the reversible ADP-ribosylation of Arg-95 inactivates the nitrogenase reductase and regulates nitrogenase activity.

The catalysed reaction is N2 + 8 reduced [2Fe-2S]-[ferredoxin] + 16 ATP + 16 H2O = H2 + 8 oxidized [2Fe-2S]-[ferredoxin] + 2 NH4(+) + 16 ADP + 16 phosphate + 6 H(+). The key enzymatic reactions in nitrogen fixation are catalyzed by the nitrogenase complex, which has 2 components: the iron protein and the molybdenum-iron protein. This is Nitrogenase iron protein 2 (nifH2) from Methanobacterium ivanovii.